A 1056-amino-acid polypeptide reads, in one-letter code: MPKRTDIHKILVIGSGPIIIGQAAEFDYSGTQACLALREEGYETILVNSNPATIMTDKEIADHVYIEPLTVESLSRIIRQEYPDAILPTLGGQIGLNLAVSLSETGLLDELGIELLGTKLDSIDEAEDREKFKELMNELGEPVPASQTVNTVDEAVEFAHQCGYPVIVRPAFTMGGTGGGICHNDAEMRTVAKNGLELSPVTQCLIEKSIAGYKEIEFEVMRDAADNVMVVCCMENFDPVGIHTGDSIVFAPNQTLSDREYQMLRDCALKLIRALKIEGGCNVQLALDPQSFQYNVIEVNPRVSRSSALASKATGYPIAKMAAKIAVGLTLDEIKNPVTKTTFAEFEPALDYVVCKIPRWPFDKFTQADRHLGSQMKATGEVMAIGRTAEEALHKAVRSLEIDEKDLFSAEAHHAPTDMLEKKLRYPQDDRLFYLAETFRRGYSLQQTHDLTKISPYFLDIVKHLVELEDDLSTKPFDVETLITSKKYGFSDATIARLWHTSSQEVRKFRKQNEVLPVYKMIDTCAAEFASSTPYFYSAYDHENESQRTKKPSILVLGSGPIRIGQGVEFDYATVHSVKAIQRAGYEAIVINSNPETVSTDFSVSDKLYFEPLTLEDVLNVIDLEQPVGVIVQFGGQTAINLAEGLAKNGVNILGTTVDDLDAAEDREVFDQVITDLNLKQPIGLTATTHSAVIKAAEKIGYPVLVRPSYVLGGKAMETVYNQEELQQYLQQNASITADHPILIDAYLEGRECEVDAICDGKDVLIPGIMEHIEHAGVHSGDSMAVYPPQHFNDDIKRQIVTATEKLAVALKCIGIMNIQFIVHNHEVYILEVNPRASRTVPFLSKITGIEMAQVATRVILGQSLADQGFTNGLYPEPQTIHVKAPVFSFNKLANVDSYLSPEMKSTGEVMGTDTTYEKALHKAFSGAHIQVPNDGKILFTIENGDEKEVLPLAKRFAQIGYQVFTTPQTASHFKDNGIHIHQEISNIDELNCLLKAGQIDLVINTMRHDYEQDSLGFQIRQSTIAQNVPLMTSLDTVNALLRVKEDQSLEAITIK.

The carboxyphosphate synthetic domain stretch occupies residues 1 to 401; it reads MPKRTDIHKI…ALHKAVRSLE (401 aa). R129, R169, G175, G176, K208, I210, E215, G241, I242, H243, Q284, and E298 together coordinate ATP. One can recognise an ATP-grasp 1 domain in the interval 133 to 327; that stretch reads KELMNELGEP…IAKMAAKIAV (195 aa). The Mg(2+) site is built by Q284, E298, and N300. Q284, E298, and N300 together coordinate Mn(2+). The oligomerization domain stretch occupies residues 402–546; the sequence is IDEKDLFSAE…YSAYDHENES (145 aa). The carbamoyl phosphate synthetic domain stretch occupies residues 547-929; sequence QRTKKPSILV…ALHKAFSGAH (383 aa). Residues 671–861 form the ATP-grasp 2 domain; sequence DQVITDLNLK…MAQVATRVIL (191 aa). Positions 707, 746, 748, 752, 777, 778, 779, 780, 820, and 832 each coordinate ATP. Q820, E832, and N834 together coordinate Mg(2+). Residues Q820, E832, and N834 each contribute to the Mn(2+) site. The MGS-like domain maps to 930–1056; the sequence is IQVPNDGKIL…DQSLEAITIK (127 aa). Positions 930–1056 are allosteric domain; it reads IQVPNDGKIL…DQSLEAITIK (127 aa).

Belongs to the CarB family. Composed of two chains; the small (or glutamine) chain promotes the hydrolysis of glutamine to ammonia, which is used by the large (or ammonia) chain to synthesize carbamoyl phosphate. Tetramer of heterodimers (alpha,beta)4. The cofactor is Mg(2+). Requires Mn(2+) as cofactor.

It catalyses the reaction hydrogencarbonate + L-glutamine + 2 ATP + H2O = carbamoyl phosphate + L-glutamate + 2 ADP + phosphate + 2 H(+). The catalysed reaction is hydrogencarbonate + NH4(+) + 2 ATP = carbamoyl phosphate + 2 ADP + phosphate + 2 H(+). The protein operates within amino-acid biosynthesis; L-arginine biosynthesis; carbamoyl phosphate from bicarbonate: step 1/1. It participates in pyrimidine metabolism; UMP biosynthesis via de novo pathway; (S)-dihydroorotate from bicarbonate: step 1/3. Large subunit of the glutamine-dependent carbamoyl phosphate synthetase (CPSase). CPSase catalyzes the formation of carbamoyl phosphate from the ammonia moiety of glutamine, carbonate, and phosphate donated by ATP, constituting the first step of 2 biosynthetic pathways, one leading to arginine and/or urea and the other to pyrimidine nucleotides. The large subunit (synthetase) binds the substrates ammonia (free or transferred from glutamine from the small subunit), hydrogencarbonate and ATP and carries out an ATP-coupled ligase reaction, activating hydrogencarbonate by forming carboxy phosphate which reacts with ammonia to form carbamoyl phosphate. The chain is Carbamoyl phosphate synthase large chain from Limosilactobacillus reuteri (strain DSM 20016) (Lactobacillus reuteri).